Consider the following 322-residue polypeptide: MDPTIPALGTSQTPINRREETPCYKQTLSLTVLTCIISLVGLTGNAVVLWLLGFRMRRNAVSTYILNLAAVDFLFLSGHIVRSPLRLISIRHPISKIVNPVMTFPYFIGLSMLSAISTERCLSVLWPMWYRCRRPRHLSVVVCVLLWALSLLRSILEWMFCDFLFSGADSVWCETSDFITIAWLIFLCVVLCGSSLVLLVRILCGSRKMPLTRLYVTILLTVLVFLLCGLPFGIQWALFSRIHLDWKVLFCHVHLISVFLSSLNSSANPIIYFFVGSFRQRQNRQNLKLVLQRALQDTPEVDEGGGRLPEETLELSVSRLEQ.

The Extracellular segment spans residues 1-31; the sequence is MDPTIPALGTSQTPINRREETPCYKQTLSLT. Residues 32-52 form a helical membrane-spanning segment; the sequence is VLTCIISLVGLTGNAVVLWLL. Over 53 to 60 the chain is Cytoplasmic; sequence GFRMRRNA. The helical transmembrane segment at 61 to 81 threads the bilayer; the sequence is VSTYILNLAAVDFLFLSGHIV. Residues 82–96 lie on the Extracellular side of the membrane; it reads RSPLRLISIRHPISK. A helical transmembrane segment spans residues 97-117; the sequence is IVNPVMTFPYFIGLSMLSAIS. Over 118–139 the chain is Cytoplasmic; it reads TERCLSVLWPMWYRCRRPRHLS. A helical transmembrane segment spans residues 140 to 160; that stretch reads VVVCVLLWALSLLRSILEWMF. Topologically, residues 161 to 177 are extracellular; sequence CDFLFSGADSVWCETSD. The chain crosses the membrane as a helical span at residues 178–198; that stretch reads FITIAWLIFLCVVLCGSSLVL. Topologically, residues 199–213 are cytoplasmic; that stretch reads LVRILCGSRKMPLTR. Residues 214-234 traverse the membrane as a helical segment; it reads LYVTILLTVLVFLLCGLPFGI. The Extracellular portion of the chain corresponds to 235–254; the sequence is QWALFSRIHLDWKVLFCHVH. Residues 255–275 form a helical membrane-spanning segment; the sequence is LISVFLSSLNSSANPIIYFFV. The Cytoplasmic segment spans residues 276-322; the sequence is GSFRQRQNRQNLKLVLQRALQDTPEVDEGGGRLPEETLELSVSRLEQ.

The protein belongs to the G-protein coupled receptor 1 family. Mas subfamily.

The protein localises to the cell membrane. Orphan receptor. Probably involved in the function of nociceptive neurons. May regulate nociceptor function and/or development, including the sensation or modulation of pain. Potently activated by enkephalins. The chain is Mas-related G-protein coupled receptor member X3 (MRGPRX3) from Macaca mulatta (Rhesus macaque).